Consider the following 297-residue polypeptide: 4-diphosphocytidyl-2-C-methyl-D-erythritol kinase (297 aa).

Residues K6 and D144 contribute to the active site.

The protein belongs to the GHMP kinase family. IspE subfamily.

The catalysed reaction is 4-CDP-2-C-methyl-D-erythritol + ATP = 4-CDP-2-C-methyl-D-erythritol 2-phosphate + ADP + H(+). Its pathway is isoprenoid biosynthesis; isopentenyl diphosphate biosynthesis via DXP pathway; isopentenyl diphosphate from 1-deoxy-D-xylulose 5-phosphate: step 3/6. Functionally, catalyzes the phosphorylation of the position 2 hydroxy group of 4-diphosphocytidyl-2C-methyl-D-erythritol. This is 4-diphosphocytidyl-2-C-methyl-D-erythritol kinase from Leptospira interrogans serogroup Icterohaemorrhagiae serovar Lai (strain 56601).